The sequence spans 392 residues: Alanine--glyoxylate aminotransferase (392 aa).

The residue at position 209 (K209) is an N6-(pyridoxal phosphate)lysine. The residue at position 225 (K225) is an N6-acetyllysine; alternate. K225 bears the N6-succinyllysine; alternate mark. Residues K234 and K312 each carry the N6-acetyllysine modification. R360 contacts substrate. The Microbody targeting signal motif lies at 390-392; sequence SQL.

Belongs to the class-V pyridoxal-phosphate-dependent aminotransferase family. In terms of assembly, homodimer. Pyridoxal 5'-phosphate serves as cofactor.

The protein localises to the peroxisome. It carries out the reaction L-serine + pyruvate = 3-hydroxypyruvate + L-alanine. It catalyses the reaction glyoxylate + L-alanine = glycine + pyruvate. Its function is as follows. Peroxisomal aminotransferase that catalyzes the transamination of glyoxylate to glycine and contributes to the glyoxylate detoxification. Also catalyzes the transamination between L-serine and pyruvate and contributes to gluconeogenesis from the L-serine metabolism. The protein is Alanine--glyoxylate aminotransferase of Oryctolagus cuniculus (Rabbit).